The sequence spans 374 residues: Queuine tRNA-ribosyltransferase (374 aa).

Catalysis depends on D89, which acts as the Proton acceptor. Substrate is bound by residues D89–F93, D143, Q187, and G214. The tract at residues G245–D251 is RNA binding. The active-site Nucleophile is D264. The segment at T269 to R273 is RNA binding; important for wobble base 34 recognition. Zn(2+) contacts are provided by C302, C304, C307, and H333.

The protein belongs to the queuine tRNA-ribosyltransferase family. In terms of assembly, homodimer. Within each dimer, one monomer is responsible for RNA recognition and catalysis, while the other monomer binds to the replacement base PreQ1. The cofactor is Zn(2+).

It catalyses the reaction 7-aminomethyl-7-carbaguanine + guanosine(34) in tRNA = 7-aminomethyl-7-carbaguanosine(34) in tRNA + guanine. Its pathway is tRNA modification; tRNA-queuosine biosynthesis. In terms of biological role, catalyzes the base-exchange of a guanine (G) residue with the queuine precursor 7-aminomethyl-7-deazaguanine (PreQ1) at position 34 (anticodon wobble position) in tRNAs with GU(N) anticodons (tRNA-Asp, -Asn, -His and -Tyr). Catalysis occurs through a double-displacement mechanism. The nucleophile active site attacks the C1' of nucleotide 34 to detach the guanine base from the RNA, forming a covalent enzyme-RNA intermediate. The proton acceptor active site deprotonates the incoming PreQ1, allowing a nucleophilic attack on the C1' of the ribose to form the product. After dissociation, two additional enzymatic reactions on the tRNA convert PreQ1 to queuine (Q), resulting in the hypermodified nucleoside queuosine (7-(((4,5-cis-dihydroxy-2-cyclopenten-1-yl)amino)methyl)-7-deazaguanosine). This chain is Queuine tRNA-ribosyltransferase, found in Yersinia pseudotuberculosis serotype O:1b (strain IP 31758).